A 521-amino-acid polypeptide reads, in one-letter code: Spermidine transporter DUR31 (521 aa).

A helical transmembrane segment spans residues 11-31 (AIIYLSYAFMLATGLFLAWKF). An N-linked (GlcNAc...) asparagine glycan is attached at Asn41. The next 12 membrane-spanning stretches (helical) occupy residues 47–67 (IPLALNFVASAMGVGIITTYA), 79–99 (LVYTICGAIPIVGFAVVGPVI), 117–137 (FGMVTALYLSAFTCLTMFLFM), 156–176 (ALGAVIVECVVTTIYTFFGGF), 187–207 (GVCVLLLLIICAAGMGSYIEI), 227–247 (LVYILFVAIVTNDCFMSGFWL), 264–284 (IAAFVTFAICTLIGTTGFLAV), 310–330 (WLVAFVLIFCIVLSTCTFDSL), 354–374 (IMLILIMVPIVVLAVKVADNI), 377–397 (IYLIADLVSAAIIPSVFLGLA), 406–426 (GFDVMAGGLGALLGVFIFGTV), and 453–473 (FGAFVIAPVGGVIITLASAAL).

It belongs to the sodium:solute symporter (SSF) (TC 2.A.21) family.

The protein resides in the membrane. The enzyme catalyses spermidine(in) = spermidine(out). Functionally, spermidine transporter that is also used by salivary gland-secreted histatin 5 (Hst 5) to enter into candidal cells. A major component of host nonimmune defense systems is salivary histatins, a family of small (3-4 kDa), histidine-rich, cationic proteins secreted by major salivary glands in humans and higher primates. Hst 5 is the most potent of the 12 histatin family members and has fungicidal activity against blastoconidial and filamentous forms of Candida albicans. DUR31 only functions under high concentrations of Hst 5. Hst 5 cojugates to spermidine to be uptaken by DUR31. This Candida albicans (strain SC5314 / ATCC MYA-2876) (Yeast) protein is Spermidine transporter DUR31.